Consider the following 110-residue polypeptide: Class I hydrophobin 2 (110 aa).

A signal peptide spans methionine 1 to alanine 19. Intrachain disulfides connect cysteine 29–cysteine 89, cysteine 36–cysteine 83, cysteine 37–cysteine 70, and cysteine 90–cysteine 103.

The protein belongs to the fungal hydrophobin family. In terms of assembly, self-assembles to form functional amyloid fibrils called rodlets. Self-assembly into fibrillar rodlets occurs spontaneously at hydrophobic:hydrophilic interfaces and the rodlets further associate laterally to form amphipathic monolayers.

It is found in the secreted. The protein localises to the cell wall. In terms of biological role, aerial growth, conidiation, and dispersal of filamentous fungi in the environment rely upon a capability of their secreting small amphipathic proteins called hydrophobins (HPBs) with low sequence identity. Class I can self-assemble into an outermost layer of rodlet bundles on aerial cell surfaces, conferring cellular hydrophobicity that supports fungal growth, development and dispersal; whereas Class II form highly ordered films at water-air interfaces through intermolecular interactions but contribute nothing to the rodlet structure. Pnh2 is a class I hydrophobin that might be involved in the attachment of the hydrophilic wall of hyphae to the hydrophobic surface of wood under inorganic phosphate (Pi)-deficient conditions and enable the mycelium to degrade efficiently the components of wood and to acquire nutrients containing Pi. This chain is Class I hydrophobin 2, found in Pholiota nameko.